A 450-amino-acid chain; its full sequence is MEFLSRISQHLGIVEDVDRDGTVFILGKEYAPLNNKSRTDVETDDSALESLINIVSLNPGLLSDVHSRVFFTYRTQFTPIRRNENGPSPINFTLFFRDNPINTLENALTDPDSFYSDIGWGCMIRTGQALLANAIQRVKLAREFRINASRIDDNELNLIRWFQDDVKYPLSLHNFVKAEEKISGMKPGQWFGPSATARSIKTLIEGFPLCGIKNCIISTQSADIYEDEVTRIFHKDRDANLLLLFAVRLGVDKINSLYWKDIFKILSSPYSVGIAGGKPSSSLYFFGYQNENLFYLDPHNTQQSSLMMDDLEFYRSCHGHKFNKLHISETDPSMLLGMLISGKNEWDQFHTYFRDSQIIQFLTTRPENDLYQSANMSVGSDSIHSLESDIQDTGEYVDVGTLVSGKQMSSPQPKDEEFEDVKCKSQRIIVCEDPADPEVEQVLVEDSSSC.

The active-site Nucleophile is the C122. Catalysis depends on residues D297 and H299.

The protein belongs to the peptidase C54 family.

It localises to the cytoplasm. Its subcellular location is the nucleus. It is found in the preautophagosomal structure. It carries out the reaction [protein]-C-terminal L-amino acid-glycyl-phosphatidylethanolamide + H2O = [protein]-C-terminal L-amino acid-glycine + a 1,2-diacyl-sn-glycero-3-phosphoethanolamine. Its function is as follows. Cysteine protease that plays a key role in cytoplasm to vacuole transport (Cvt) and autophagy by mediating both proteolytic activation and delipidation of ATG8. Required for selective autophagic degradation of the nucleus (nucleophagy) as well as for mitophagy which contributes to regulate mitochondrial quantity and quality by eliminating the mitochondria to a basal level to fulfill cellular energy requirements and preventing excess ROS production. The protease activity is required for proteolytic activation of ATG8: cleaves the C-terminal amino acid of ATG8 to reveal a C-terminal glycine. ATG8 ubiquitin-like activity requires the exposure of the glycine at the C-terminus for its conjugation to phosphatidylethanolamine (PE) and its insertion to membranes, which is necessary for autophagy. The ATG8-PE conjugate mediates tethering between adjacent membranes and stimulates membrane hemifusion, leading to expansion of the autophagosomal membrane during autophagy. In addition to the protease activity, also catalyzes deconjugation of PE-conjugated forms of ATG8 during macroautophagy: ATG8 delipidation is required to release the protein from membranes, which facilitates multiple events during macroautophagy, and especially for efficient autophagosome biogenesis, the assembly of ATG9-containing tubulovesicular clusters into phagophores/autophagosomes, and for the disassembly of PAS-associated ATG components. ATG8 delipidation by ATG4 also recycles ATG8-PE generated on inappropriate membranes to maintain a reservoir of unlipidated ATG8 that is required for autophagosome formation at the PAS. This chain is Probable cysteine protease ATG4 (ATG4), found in Kluyveromyces lactis (strain ATCC 8585 / CBS 2359 / DSM 70799 / NBRC 1267 / NRRL Y-1140 / WM37) (Yeast).